A 205-amino-acid polypeptide reads, in one-letter code: MAQLYFYYSAMNAGKTTALLQSSYNYQERGMRTVLYTADMNSRDNRYKQIKSRIGLYASARVFNIKTNFFDQVVTIHQKDIIHCVLVDECHFLNRNQVIDLSKIVDVLNIPVLCYGLRTDFRADLFSGSLWLLAWADKLIELKTICYCGRKANRVLRIDDQGLIIRDGNQILVGGNNRYVSVCRKHFVEQLESPLSLTKRVYKNR.

ATP is bound by residues 9–16 (SAMNAGKT) and 88–91 (DECH). The active-site Proton acceptor is the Glu-89. Zn(2+) is bound by residues Cys-146, Cys-148, Cys-183, and His-186.

The protein belongs to the thymidine kinase family. As to quaternary structure, homotetramer.

Its subcellular location is the cytoplasm. The catalysed reaction is thymidine + ATP = dTMP + ADP + H(+). This chain is Thymidine kinase, found in Blochmanniella pennsylvanica (strain BPEN).